The chain runs to 173 residues: Large ribosomal subunit protein uL16 (173 aa).

The protein belongs to the universal ribosomal protein uL16 family.

This is Large ribosomal subunit protein uL16 from Methanococcus maripaludis (strain DSM 14266 / JCM 13030 / NBRC 101832 / S2 / LL).